The following is a 280-amino-acid chain: MKLCHFEAGLEHPIFLISGPCVIESEQLALDTAGQLKELCERVGVPFIYKSSFDKANRSSTRSFRGLGLEEGLRILETVKQQIGVPVLTDVHEDTPLEEVAAVVDVLQTPAFLCRQTNFIQNVARQGRPVNIKKGQFLAPWDMGNVVDKAREAGNDQIMVCERGVSFGYNTLVSDMRGLAVMRETGCPVVFDATHSVQQPGGKGTSSGGQREFVPVLARAAVASGVAGLFMETHPDPDKALSDGPNAWPLPLMEELLVTLKTLDDVVKAQGFIESRFLNT.

This sequence belongs to the KdsA family.

Its subcellular location is the cytoplasm. It carries out the reaction D-arabinose 5-phosphate + phosphoenolpyruvate + H2O = 3-deoxy-alpha-D-manno-2-octulosonate-8-phosphate + phosphate. It functions in the pathway carbohydrate biosynthesis; 3-deoxy-D-manno-octulosonate biosynthesis; 3-deoxy-D-manno-octulosonate from D-ribulose 5-phosphate: step 2/3. The protein operates within bacterial outer membrane biogenesis; lipopolysaccharide biosynthesis. The polypeptide is 2-dehydro-3-deoxyphosphooctonate aldolase (Thioalkalivibrio sulfidiphilus (strain HL-EbGR7)).